A 198-amino-acid chain; its full sequence is ATP synthase subunit b (198 aa).

The chain crosses the membrane as a helical span at residues 49-67 (IWKWANFLILAGGLGYLVG).

It belongs to the ATPase B chain family. F-type ATPases have 2 components, F(1) - the catalytic core - and F(0) - the membrane proton channel. F(1) has five subunits: alpha(3), beta(3), gamma(1), delta(1), epsilon(1). F(0) has three main subunits: a(1), b(2) and c(10-14). The alpha and beta chains form an alternating ring which encloses part of the gamma chain. F(1) is attached to F(0) by a central stalk formed by the gamma and epsilon chains, while a peripheral stalk is formed by the delta and b chains.

The protein localises to the cell inner membrane. In terms of biological role, f(1)F(0) ATP synthase produces ATP from ADP in the presence of a proton or sodium gradient. F-type ATPases consist of two structural domains, F(1) containing the extramembraneous catalytic core and F(0) containing the membrane proton channel, linked together by a central stalk and a peripheral stalk. During catalysis, ATP synthesis in the catalytic domain of F(1) is coupled via a rotary mechanism of the central stalk subunits to proton translocation. Functionally, component of the F(0) channel, it forms part of the peripheral stalk, linking F(1) to F(0). This Solibacter usitatus (strain Ellin6076) protein is ATP synthase subunit b.